The sequence spans 411 residues: Glutamate dehydrogenase A (411 aa).

Residue lysine 102 is part of the active site.

The protein belongs to the Glu/Leu/Phe/Val dehydrogenases family.

It carries out the reaction L-glutamate + NAD(+) + H2O = 2-oxoglutarate + NH4(+) + NADH + H(+). It catalyses the reaction L-glutamate + NADP(+) + H2O = 2-oxoglutarate + NH4(+) + NADPH + H(+). The polypeptide is Glutamate dehydrogenase A (GDHA) (Nicotiana plumbaginifolia (Leadwort-leaved tobacco)).